The primary structure comprises 270 residues: Shikimate dehydrogenase (NADP(+)) (270 aa).

Shikimate contacts are provided by residues 14–16 (SKS) and Thr60. Lys64 (proton acceptor) is an active-site residue. Glu76 contacts NADP(+). Shikimate is bound by residues Asn85 and Asp101. Residues 125-129 (GAGGA), 149-154 (NRTASR), and Met213 contribute to the NADP(+) site. Tyr215 is a binding site for shikimate. Gly236 is an NADP(+) binding site.

It belongs to the shikimate dehydrogenase family. In terms of assembly, homodimer.

It catalyses the reaction shikimate + NADP(+) = 3-dehydroshikimate + NADPH + H(+). It functions in the pathway metabolic intermediate biosynthesis; chorismate biosynthesis; chorismate from D-erythrose 4-phosphate and phosphoenolpyruvate: step 4/7. Involved in the biosynthesis of the chorismate, which leads to the biosynthesis of aromatic amino acids. Catalyzes the reversible NADPH linked reduction of 3-dehydroshikimate (DHSA) to yield shikimate (SA). The chain is Shikimate dehydrogenase (NADP(+)) from Stutzerimonas stutzeri (strain A1501) (Pseudomonas stutzeri).